Consider the following 227-residue polypeptide: Dephospho-CoA kinase (227 aa).

Residues 31 to 227 (KIGLTGGIGS…EKLFQFINCL (197 aa)) enclose the DPCK domain. Residue 39–44 (GSGKST) coordinates ATP.

It belongs to the CoaE family.

The protein localises to the cytoplasm. The catalysed reaction is 3'-dephospho-CoA + ATP = ADP + CoA + H(+). It participates in cofactor biosynthesis; coenzyme A biosynthesis; CoA from (R)-pantothenate: step 5/5. In terms of biological role, catalyzes the phosphorylation of the 3'-hydroxyl group of dephosphocoenzyme A to form coenzyme A. This Clostridium tetani (strain Massachusetts / E88) protein is Dephospho-CoA kinase.